The following is a 1282-amino-acid chain: Crescerin-like protein che-12 (1282 aa).

2 TOG regions span residues 33–240 and 268–515; these read DFDT…EHTE and PSLV…MDSF. HEAT repeat units follow at residues 59 to 96, 100 to 137, 162 to 209, 261 to 300, 308 to 345, 349 to 386, 388 to 421, and 424 to 461; these read QKKGELFKCIDKIICDDRWELQHQCIKFLVEAMPTFGS, YCMCFVMPNLIPKLVSNKVTVRKITHQAIATFLRLKPE, ELHH…FIGN, RLRFGIVPSLVCALIAEDTDANQRISGLEKMKQVVDQITP, PHLHSYLLMLSNVLEDLNFKVVVLALDIVRATGHHLKG, AHIQQFVNLVAKHFGNQKSVIKQIIMMTFMELFQNINP, TVGGCLRVFLENKNSRVREEVINIYTASLMTISP, and FNLQPLVNILVPMFHDVKKRVRLAAFEQLSVLAYLLNG. Residues 566–714 form a disordered region; it reads IQQQGQAEKP…RSFDDRPAKA (149 aa). 2 stretches are compositionally biased toward low complexity: residues 575-592 and 633-644; these read PSFSLPQQPAQQASHQAQ and SAASNPNSSTSS. Residues 702–712 are compositionally biased toward basic and acidic residues; sequence DPPRSFDDRPA. 2 TOG regions span residues 800-1022 and 1066-1282; these read NMSV…ANVE and TELL…ALIR. 7 HEAT repeats span residues 838 to 875, 879 to 917, 919 to 953, 961 to 998, 1095 to 1132, 1177 to 1214, and 1219 to 1258; these read DNLKEVIIAILNECKNLRSSVSRVAIVTIGTVAQNLNS, SEMEKICAVLLSKSGDVSNAFIRDDATDSLNKLVKAATA, KALQGIILAGAKSKNNTIRSSCANFVYDIITIQGS, NALSNVLPVLLQFSRDQSPQVRNPGKQSLCFLSKDPNF, ASDTRLIEAFISRLGDTNGKVASCAMETYISTMGSMAK, IEPVSLLPAMTSATKKSNVKQRPFILTQYCELSKLAYK, and QVEVMALPLLWDSVKNSAPDVDNKKATQYLAKTLAKLIGE.

It belongs to the Crescerin family. In terms of tissue distribution, detected in a subset of amphid neurons that lack wing- or finger-like ciliary extensions. Likewise, detected in phasmid neurons.

The protein resides in the cell projection. Its subcellular location is the cilium. It is found in the perikaryon. The protein localises to the dendrite. Required for normal structure and function of sensory cilia on amphid neurons, especially for the formation of distal ciliary structures, but is less important for normal assembly of middle and basal ciliary structures. Plays a role in the organization of axoneme microtubule bundles in sensory cilia. Required for normal structure and function of the ASER neuron that mediates attraction to NaCl. Required for normal chemotaxis to NaCl. Required for normal avoidance response to high osmolarity. In contrast, is not required for normal chemotaxis to isoamyl alcohol. Does not play a role in intraflagella transport (IFT). Promotes dauer formation in response to pheromones such as the ascarosides ascr#2, ascr#3, ascr#5, ascr#8 and icas#9. The polypeptide is Crescerin-like protein che-12 (Caenorhabditis elegans).